Here is a 202-residue protein sequence, read N- to C-terminus: Small ribosomal subunit protein uS4c (202 aa).

Residues 90–148 enclose the S4 RNA-binding domain; sequence MRLDNVIFRLGMSSTIPGARQLVNHRHIMINDEMVDTPGYNCKPRDIITLKNISESRSG.

This sequence belongs to the universal ribosomal protein uS4 family. In terms of assembly, part of the 30S ribosomal subunit. Contacts protein S5. The interaction surface between S4 and S5 is involved in control of translational fidelity.

Its subcellular location is the plastid. The protein resides in the chloroplast. In terms of biological role, one of the primary rRNA binding proteins, it binds directly to 16S rRNA where it nucleates assembly of the body of the 30S subunit. Functionally, with S5 and S12 plays an important role in translational accuracy. The sequence is that of Small ribosomal subunit protein uS4c (rps4) from Haplomitrium hookeri (Hooker's flapwort).